The primary structure comprises 355 residues: Oligopeptide transport ATP-binding protein AmiE (355 aa).

Positions Leu-9–Leu-260 constitute an ABC transporter domain. ATP is bound at residue Gly-45–Ser-52.

Belongs to the ABC transporter superfamily.

The protein localises to the cell membrane. Part of the binding-protein-dependent transport system for oligopeptides. Probably responsible for energy coupling to the transport system. This is Oligopeptide transport ATP-binding protein AmiE (amiE) from Streptococcus pneumoniae serotype 4 (strain ATCC BAA-334 / TIGR4).